The sequence spans 398 residues: MKQLTILGSTGSIGCSTLDVVRHNPDSFRVIALVAGKNVARMAEQCLEFSPRYAVMDDTSSAEQLKIMLQQHGSRTEVLSGQQAACEMAALDEVGHVMAAIVGAAGLLPTLAAIRAGKTILLANKESLVTCGRLFMDEVKRSNARLLPVDSEHNAIFQSLPQSIQHNLGYADLEQNGVTSILLTGSGGPFRETPMCDLAAMTPDQACRHPNWSMGRKISVDSATMMNKGLEYIEARWLFNASARQMEVLIHPQSVIHSMVRYQDGSVLAQLGEPDMRTPIAHTMAWPNRVTSGAQPLDFCKLSALTFSAPDYQRYPCLKLAMEAFEQGQAATTALNAANEITVAAFLAQQIRFTDIAGLNLAVLERMDLQEPASVEDVLQVDAIAREVARKQVIRLSR.

The NADPH site is built by threonine 10, glycine 11, serine 12, isoleucine 13, glycine 36, lysine 37, asparagine 38, and asparagine 124. Lysine 125 is a binding site for 1-deoxy-D-xylulose 5-phosphate. NADPH is bound at residue glutamate 126. Residue aspartate 150 coordinates Mn(2+). 1-deoxy-D-xylulose 5-phosphate is bound by residues serine 151, glutamate 152, serine 186, and histidine 209. Glutamate 152 contacts Mn(2+). Glycine 215 provides a ligand contact to NADPH. The 1-deoxy-D-xylulose 5-phosphate site is built by serine 222, asparagine 227, lysine 228, and glutamate 231. Residue glutamate 231 coordinates Mn(2+).

Belongs to the DXR family. Homodimer. Mg(2+) serves as cofactor. It depends on Mn(2+) as a cofactor.

The enzyme catalyses 2-C-methyl-D-erythritol 4-phosphate + NADP(+) = 1-deoxy-D-xylulose 5-phosphate + NADPH + H(+). It functions in the pathway isoprenoid biosynthesis; isopentenyl diphosphate biosynthesis via DXP pathway; isopentenyl diphosphate from 1-deoxy-D-xylulose 5-phosphate: step 1/6. Its function is as follows. Catalyzes the NADPH-dependent rearrangement and reduction of 1-deoxy-D-xylulose-5-phosphate (DXP) to 2-C-methyl-D-erythritol 4-phosphate (MEP). This is 1-deoxy-D-xylulose 5-phosphate reductoisomerase from Salmonella paratyphi A (strain ATCC 9150 / SARB42).